A 638-amino-acid polypeptide reads, in one-letter code: Octopamine receptor 1 (638 aa).

Over 1–28 (MSRDIFMKRLRLHLLFDEVAMVTHIVGD) the chain is Extracellular. Residues 29-53 (VLSSVLLCAVVLLVLVGNTLVVAAV) traverse the membrane as a helical segment. At 54-64 (ATSRKLRTVTN) the chain is on the cytoplasmic side. A helical membrane pass occupies residues 65-87 (VFIVNLACADLLLGVLVLPFSAV). Residues 88–102 (NEIKDVWIFGHVWCQ) are Extracellular-facing. Cysteine 101 and cysteine 230 are disulfide-bonded. Residues 103–124 (VWLAVDVWLCTASILNLCCISL) form a helical membrane-spanning segment. Over 125-147 (DRYLAITRPIRYPGLMSAKRAKT) the chain is Cytoplasmic. The chain crosses the membrane as a helical span at residues 148-167 (LVAGVWLFSFVICCPPLIGW). Residues 168–239 (NDGGDGIMDY…CELTNSRGYR (72 aa)) lie on the Extracellular side of the membrane. Residues asparagine 178, asparagine 207, and asparagine 215 are each glycosylated (N-linked (GlcNAc...) asparagine). The chain crosses the membrane as a helical span at residues 240 to 259 (IYAALGSFFIPMLVMVFFYL). Residues 260-520 (QIYRAAVKTI…FNREKKAAKT (261 aa)) lie on the Cytoplasmic side of the membrane. The helical transmembrane segment at 521 to 545 (LAIIVGAFIMCWMPFFTIYLVGAFC) threads the bilayer. The Extracellular portion of the chain corresponds to 546 to 551 (ENCISP). Residues 552 to 575 (IVFSVAFWLGYCNSAMNPCVYALF) form a helical membrane-spanning segment. Topologically, residues 576–638 (SRDFRFAFRK…TASGGNGGYT (63 aa)) are cytoplasmic. A disordered region spans residues 618–638 (DDAKSSSDIGPTASGGNGGYT).

The protein belongs to the G-protein coupled receptor 1 family. Expressed in the central nervous system.

The protein resides in the cell membrane. Its function is as follows. G-protein coupled receptor for octopamine (OA), which is a neurotransmitter, neurohormone, and neuromodulator in invertebrates. Activation of this receptor by octopamine induces an increase in both inositol phosphates and cyclic AMP. The coupling to adenylyl cyclase seems to be less efficient than the coupling to phospholipase C. The rank order of potency for agonists is p-synephrine &gt;= clonidine &gt; p-octopamine = xylometazoline = phenylephrine = oxymetazoline &gt; B-HT920 &gt; serotonin = p-tyramine &gt; epinephrine &gt; norepinephrine &gt; methoxamine = dopamine = histamine. For antagonists, the rank order is yohimbine &gt; chlopromazine / spiperone &gt; phentolamine &gt; mianserine &gt; rauwolscine &gt; prazosin &gt; alprenolol / propanolol &gt; pindolol. In Lymnaea stagnalis (Great pond snail), this protein is Octopamine receptor 1.